A 299-amino-acid chain; its full sequence is GTPase Era (299 aa).

Residues 5–175 (RSGFVCFVGR…TDVLAGKLPP (171 aa)) enclose the Era-type G domain. Positions 13–20 (GRPNTGKS) are G1. 13 to 20 (GRPNTGKS) contacts GTP. Positions 39-43 (QTTRH) are G2. The interval 60-63 (DTPG) is G3. Residues 60–64 (DTPGL) and 124–127 (TKID) each bind GTP. The tract at residues 124–127 (TKID) is G4. Residues 154–156 (VSA) are G5. The region spanning 206-285 (VRDELPHSLA…YLDLRVKIAK (80 aa)) is the KH type-2 domain.

The protein belongs to the TRAFAC class TrmE-Era-EngA-EngB-Septin-like GTPase superfamily. Era GTPase family. In terms of assembly, monomer.

It localises to the cell envelope. The protein localises to the secreted. It is found in the cell wall. Exhibits GTPase activity. Binds RNA but is probably not involved in ribosome assembly in mycobacteria. In Mycobacterium sp. (strain JLS), this protein is GTPase Era.